Reading from the N-terminus, the 340-residue chain is MSSSSAHQKASPPIEEEATEHGPFPIEQLQASGIAALDVKKLKDAGLCTVESVAYSPRKDLLQIKGISEAKVDKIIEAASKLVPLGFTSASQLHAQRLEIIQLTTGSRELDQILDGGIETGSITEMYGEFRSGKTQLCHTLCVTCQLPLDQGGGEGKALYIDAEGTFRPQRILQIADRFGLNGADVLENVAYARAYNTDHQSRLLLEAASMMVETRFALMVVDSATALYRTDFSGRGELSARQMHLAKFLRSLQKLADEFGVAVVITNQVVAQVDGAAMFAGPQIKPIGGNIMAHASTTRLFLRKGRGEERICKVISSPCLAEAEARFQISSEGVTDVKD.

The interval 1–22 is disordered; that stretch reads MSSSSAHQKASPPIEEEATEHG. The HhH domain maps to 49 to 78; sequence TVESVAYSPRKDLLQIKGISEAKVDKIIEA. Residue 128 to 135 coordinates ATP; sequence GEFRSGKT.

The protein belongs to the RecA family. RAD51 subfamily. In terms of assembly, self-associates and may interact with XRCC3 homolog. Highly expressed in mitotic and meiotic tissues, but low levels in differentiated tissues.

It localises to the nucleus. Its function is as follows. Binds to single and double-stranded DNA and exhibits DNA-dependent ATPase activity. Unwinds duplex DNA. Component of the meiotic recombination pathway. Seems to play a role in mediating chromosome homology search, chromosome pairing and synapsis at early stages and probably chromosome crossing-over at later stages in meiosis. Probably is involved in the repair of meiotic double strand breaks (DBSs) and in homologous recombination. The chain is DNA repair protein RAD51 homolog B (RAD51B) from Zea mays (Maize).